Here is a 313-residue protein sequence, read N- to C-terminus: MRFKGLDLNLLVALDALMTKRSVTAAARSINLSQPAMSSAIARLRSYFQDELFRMQGRELITTPRAEALAPAIRDALLHIQFSIISWDMFNPAQSDRCFRIILSDFMTLVFFEKVVERVAREAPGVSFELLPPDDNPDELLRRGEVDFLIFPDVFMSSVHPKAKLFDQTLVSVGCLTNEQLLGDLSFERYMSMGHVAAQFGRALKPSVEQWLLLEHGYKRRIELVVPGFNLIPPLLSGTKRIAIIPLRLANHFAKSIPLRIVKHPLPLLSFTEAVQWPALHNKDQASIWMREILLDEAARIAAPRETAGCLGR.

The region spanning 6-63 (LDLNLLVALDALMTKRSVTAAARSINLSQPAMSSAIARLRSYFQDELFRMQGRELITT) is the HTH lysR-type domain. A DNA-binding region (H-T-H motif) is located at residues 23–42 (VTAAARSINLSQPAMSSAIA).

It belongs to the LysR transcriptional regulatory family.

In terms of biological role, nodD regulates the expression of the nodABCFE genes which encode other nodulation proteins. NodD is also a negative regulator of its own expression. Binds flavonoids as inducers. In Rhizobium meliloti (strain 1021) (Ensifer meliloti), this protein is Nodulation protein D 3 (nodD3).